We begin with the raw amino-acid sequence, 147 residues long: D-aminoacyl-tRNA deacylase (147 aa).

The Gly-cisPro motif, important for rejection of L-amino acids signature appears at 136–137; sequence GP.

The protein belongs to the DTD family. Homodimer.

The protein resides in the cytoplasm. The enzyme catalyses glycyl-tRNA(Ala) + H2O = tRNA(Ala) + glycine + H(+). It catalyses the reaction a D-aminoacyl-tRNA + H2O = a tRNA + a D-alpha-amino acid + H(+). Its function is as follows. An aminoacyl-tRNA editing enzyme that deacylates mischarged D-aminoacyl-tRNAs. Also deacylates mischarged glycyl-tRNA(Ala), protecting cells against glycine mischarging by AlaRS. Acts via tRNA-based rather than protein-based catalysis; rejects L-amino acids rather than detecting D-amino acids in the active site. By recycling D-aminoacyl-tRNA to D-amino acids and free tRNA molecules, this enzyme counteracts the toxicity associated with the formation of D-aminoacyl-tRNA entities in vivo and helps enforce protein L-homochirality. The protein is D-aminoacyl-tRNA deacylase of Streptococcus equi subsp. zooepidemicus (strain H70).